We begin with the raw amino-acid sequence, 455 residues long: Indoleacetamide hydrolase (455 aa).

Active-site charge relay system residues include Lys-71 and Ser-146. The active-site Acyl-ester intermediate is Ser-170.

This sequence belongs to the amidase family.

It participates in plant hormone metabolism; auxin biosynthesis. Its function is as follows. Hydrolyzes indole-3-acetamide (IAM) into indole-3-acetic acid (IAA). In Pseudomonas savastanoi (Pseudomonas syringae pv. savastanoi), this protein is Indoleacetamide hydrolase (iaaH).